The chain runs to 266 residues: Putative pyruvate, phosphate dikinase regulatory protein (266 aa).

An ADP-binding site is contributed by 149–156 (GVSRTSKT).

The protein belongs to the pyruvate, phosphate/water dikinase regulatory protein family. PDRP subfamily.

It carries out the reaction N(tele)-phospho-L-histidyl/L-threonyl-[pyruvate, phosphate dikinase] + ADP = N(tele)-phospho-L-histidyl/O-phospho-L-threonyl-[pyruvate, phosphate dikinase] + AMP + H(+). The enzyme catalyses N(tele)-phospho-L-histidyl/O-phospho-L-threonyl-[pyruvate, phosphate dikinase] + phosphate + H(+) = N(tele)-phospho-L-histidyl/L-threonyl-[pyruvate, phosphate dikinase] + diphosphate. In terms of biological role, bifunctional serine/threonine kinase and phosphorylase involved in the regulation of the pyruvate, phosphate dikinase (PPDK) by catalyzing its phosphorylation/dephosphorylation. This Geobacillus sp. (strain WCH70) protein is Putative pyruvate, phosphate dikinase regulatory protein.